The chain runs to 177 residues: PBAN-type neuropeptides (177 aa).

The first 23 residues, M1–G23, serve as a signal peptide directing secretion. Positions E24–K54 are excised as a propeptide. Residues E28–R73 form a disordered region. Residues S31–G45 show a composition bias toward polar residues. Residues C47–T59 are compositionally biased toward low complexity. Residue L74 is modified to Leucine amide. Residues H78–E113 constitute a propeptide that is removed on maturation. Leucine amide is present on residues L124, L154, and L166. Residues Q169 to I177 constitute a propeptide that is removed on maturation.

This sequence belongs to the pyrokinin family. In terms of tissue distribution, pyrokinins (PK) 1 to 4 are expressed in the retrocerebral complex. PK 1 is expressed in central brain, anntennal lobes and abominal ganglia. PK 2 is expressed in optical lobes and in gnathal, thoracic and abdominal ganglia. PK 3 is expressed in optical lobes and in thoracic and abdominal ganglia (at protein level).

It localises to the secreted. Its function is as follows. Pyrokinins mediate visceral muscle contractile activity (myotropic activity). In Camponotus floridanus (Florida carpenter ant), this protein is PBAN-type neuropeptides.